The chain runs to 66 residues: Beta-toxin Cbo3 (66 aa).

An LCN-type CS-alpha/beta domain is found at 1–66; it reads KEGYIVNYHD…VWPLPKKTCN (66 aa). Cystine bridges form between Cys-12-Cys-65, Cys-16-Cys-41, Cys-25-Cys-46, and Cys-29-Cys-48. Asn-66 is subject to Asparagine amide.

It belongs to the long (4 C-C) scorpion toxin superfamily. Sodium channel inhibitor family. Beta subfamily. Expressed by the venom gland.

It is found in the secreted. Beta toxins bind voltage-independently at site-4 of sodium channels and shift the voltage of activation toward more negative potentials thereby affecting sodium channel activation and promoting spontaneous and repetitive firing. A mixture of Cbo2 and Cbo3 is weakly active on the human voltage-gated sodium channels Nav1.4/SCN4A and Nav1.6/SCN8A when tested at 200 nM. In vivo, is toxic to mice when intraperitoneally injected. In Centruroides bonito (Scorpion), this protein is Beta-toxin Cbo3.